A 273-amino-acid polypeptide reads, in one-letter code: Bifunctional protein FolD (273 aa).

NADP(+) contacts are provided by residues 149–151 (GLG) and Val215.

Belongs to the tetrahydrofolate dehydrogenase/cyclohydrolase family. In terms of assembly, homodimer.

It carries out the reaction (6R)-5,10-methylene-5,6,7,8-tetrahydrofolate + NADP(+) = (6R)-5,10-methenyltetrahydrofolate + NADPH. The catalysed reaction is (6R)-5,10-methenyltetrahydrofolate + H2O = (6R)-10-formyltetrahydrofolate + H(+). The protein operates within one-carbon metabolism; tetrahydrofolate interconversion. Functionally, catalyzes the oxidation of 5,10-methylenetetrahydrofolate to 5,10-methenyltetrahydrofolate and then the hydrolysis of 5,10-methenyltetrahydrofolate to 10-formyltetrahydrofolate. This Mycoplasma genitalium (strain ATCC 33530 / DSM 19775 / NCTC 10195 / G37) (Mycoplasmoides genitalium) protein is Bifunctional protein FolD.